The primary structure comprises 102 residues: NADH-quinone oxidoreductase subunit K (102 aa).

Transmembrane regions (helical) follow at residues 5–25 (IAHY…GIFL), 31–51 (IVIL…FVAF), and 66–86 (FVLT…VVFF).

It belongs to the complex I subunit 4L family. NDH-1 is composed of 14 different subunits. Subunits NuoA, H, J, K, L, M, N constitute the membrane sector of the complex.

The protein resides in the cell inner membrane. It catalyses the reaction a quinone + NADH + 5 H(+)(in) = a quinol + NAD(+) + 4 H(+)(out). Its function is as follows. NDH-1 shuttles electrons from NADH, via FMN and iron-sulfur (Fe-S) centers, to quinones in the respiratory chain. The immediate electron acceptor for the enzyme in this species is believed to be ubiquinone. Couples the redox reaction to proton translocation (for every two electrons transferred, four hydrogen ions are translocated across the cytoplasmic membrane), and thus conserves the redox energy in a proton gradient. The polypeptide is NADH-quinone oxidoreductase subunit K (Mesorhizobium japonicum (strain LMG 29417 / CECT 9101 / MAFF 303099) (Mesorhizobium loti (strain MAFF 303099))).